The chain runs to 405 residues: L-carnitine CoA-transferase (405 aa).

Residues Lys-97 and Arg-104 each coordinate CoA. The Nucleophile role is filled by Asp-169.

The protein belongs to the CoA-transferase III family. CaiB subfamily. As to quaternary structure, homodimer.

Its subcellular location is the cytoplasm. It catalyses the reaction crotonobetainyl-CoA + (R)-carnitine = crotonobetaine + (R)-carnitinyl-CoA. The enzyme catalyses 4-(trimethylamino)butanoyl-CoA + (R)-carnitine = (R)-carnitinyl-CoA + 4-(trimethylamino)butanoate. It participates in amine and polyamine metabolism; carnitine metabolism. Catalyzes the reversible transfer of the CoA moiety from gamma-butyrobetainyl-CoA to L-carnitine to generate L-carnitinyl-CoA and gamma-butyrobetaine. Is also able to catalyze the reversible transfer of the CoA moiety from gamma-butyrobetainyl-CoA or L-carnitinyl-CoA to crotonobetaine to generate crotonobetainyl-CoA. The chain is L-carnitine CoA-transferase from Salmonella gallinarum (strain 287/91 / NCTC 13346).